The primary structure comprises 67 residues: Phycobilisome 7.8 kDa linker polypeptide, allophycocyanin-associated, core (67 aa).

The CpcD-like domain occupies methionine 1 to alanine 56.

Belongs to the phycobilisome linker protein family.

It localises to the cellular thylakoid membrane. In terms of biological role, rod linker protein, associated with allophycocyanin. Linker polypeptides determine the state of aggregation and the location of the disk-shaped phycobiliprotein units within the phycobilisome and modulate their spectroscopic properties in order to mediate a directed and optimal energy transfer. This is Phycobilisome 7.8 kDa linker polypeptide, allophycocyanin-associated, core (apcC) from Synechocystis sp. (strain PCC 6714) (Aphanocapsa sp. (strain PCC 6714)).